The sequence spans 292 residues: Formamidopyrimidine-DNA glycosylase (292 aa).

P2 functions as the Schiff-base intermediate with DNA in the catalytic mechanism. Catalysis depends on E3, which acts as the Proton donor. K61 (proton donor; for beta-elimination activity) is an active-site residue. Residues H96, R115, and K161 each coordinate DNA. The FPG-type zinc-finger motif lies at 247–281 (SAYGQEDRPCPRCGTAIRREKFMNRSSFSCPKCQP). The active-site Proton donor; for delta-elimination activity is the R271.

This sequence belongs to the FPG family. Monomer. Zn(2+) serves as cofactor.

The enzyme catalyses Hydrolysis of DNA containing ring-opened 7-methylguanine residues, releasing 2,6-diamino-4-hydroxy-5-(N-methyl)formamidopyrimidine.. It catalyses the reaction 2'-deoxyribonucleotide-(2'-deoxyribose 5'-phosphate)-2'-deoxyribonucleotide-DNA = a 3'-end 2'-deoxyribonucleotide-(2,3-dehydro-2,3-deoxyribose 5'-phosphate)-DNA + a 5'-end 5'-phospho-2'-deoxyribonucleoside-DNA + H(+). In terms of biological role, involved in base excision repair of DNA damaged by oxidation or by mutagenic agents. Acts as a DNA glycosylase that recognizes and removes damaged bases. Has a preference for oxidized purines, such as 7,8-dihydro-8-oxoguanine (8-oxoG). Has AP (apurinic/apyrimidinic) lyase activity and introduces nicks in the DNA strand. Cleaves the DNA backbone by beta-delta elimination to generate a single-strand break at the site of the removed base with both 3'- and 5'-phosphates. The polypeptide is Formamidopyrimidine-DNA glycosylase (Rhodococcus jostii (strain RHA1)).